The following is a 760-amino-acid chain: Transferrin receptor protein 1 (760 aa).

Topologically, residues 1-67 (MMDQARSAFS…KPKRCSGSIC (67 aa)) are cytoplasmic. The interval 1–67 (MMDQARSAFS…KPKRCSGSIC (67 aa)) is mediates interaction with SH3BP4. Phosphoserine is present on residues Ser-10 and Ser-19. The residue at position 20 (Tyr-20) is a Phosphotyrosine. Positions 20–23 (YTRF) match the Endocytosis signal motif. Thr-21 carries the phosphothreonine modification. Position 24 is a phosphoserine (Ser-24). The Stop-transfer sequence signature appears at 58–61 (KPKR). 2 S-palmitoyl cysteine lipidation sites follow: Cys-62 and Cys-67. The helical; Signal-anchor for type II membrane protein transmembrane segment at 68–88 (YGTIAVIVFFLIGFMIGYLGY) threads the bilayer. Over 89 to 760 (CKGVEPKTEC…GDVWDIDNEF (672 aa)) the chain is Extracellular. Thr-104 carries O-linked (GalNAc...) threonine glycosylation. In terms of domain architecture, PA spans 223-313 (SKAATVTGKL…GTGDPYTPGF (91 aa)). 2 N-linked (GlcNAc...) asparagine glycosylation sites follow: Asn-251 and Asn-317. Residues 569 to 760 (TMDTYKELIE…GDVWDIDNEF (192 aa)) form a ligand-binding region. The Cell attachment site; required for binding to transferrin motif lies at 646–648 (RGD). The N-linked (GlcNAc...) asparagine glycan is linked to Asn-727.

It belongs to the peptidase M28 family. M28B subfamily. In terms of assembly, homodimer; disulfide-linked. Binds one transferrin or HFE molecule per subunit. Binds the HLA class II histocompatibility antigen, DR1. Interacts with SH3BP3. Interacts with STEAP3; facilitates TFRC endocytosis in erythroid precursor cells. Interacts with GRM2. As to quaternary structure, (Microbial infection) Interacts with Guanarito, Junin and Machupo arenavirus glycoprotein complex. (Microbial infection) Interacts with rabies virus protein G. In terms of assembly, (Microbial infection) Interacts with SARS-CoV-2 spike protein S. In terms of processing, stearoylated by ZDHHC6 which inhibits TFRC-mediated activation of the JNK pathway and promotes mitochondrial fragmentation. Stearoylation does not affect iron uptake. Post-translationally, N- and O-glycosylated, phosphorylated and palmitoylated. The serum form is only glycosylated. Proteolytically cleaved on Arg-100 to produce the soluble serum form (sTfR). In terms of processing, palmitoylated on both Cys-62 and Cys-67. Cys-62 seems to be the major site of palmitoylation.

Its subcellular location is the cell membrane. The protein localises to the melanosome. It is found in the secreted. In terms of biological role, cellular uptake of iron occurs via receptor-mediated endocytosis of ligand-occupied transferrin receptor into specialized endosomes. Endosomal acidification leads to iron release. The apotransferrin-receptor complex is then recycled to the cell surface with a return to neutral pH and the concomitant loss of affinity of apotransferrin for its receptor. Transferrin receptor is necessary for development of erythrocytes and the nervous system. A second ligand, the hereditary hemochromatosis protein HFE, competes for binding with transferrin for an overlapping C-terminal binding site. Positively regulates T and B cell proliferation through iron uptake. Acts as a lipid sensor that regulates mitochondrial fusion by regulating activation of the JNK pathway. When dietary levels of stearate (C18:0) are low, promotes activation of the JNK pathway, resulting in HUWE1-mediated ubiquitination and subsequent degradation of the mitofusin MFN2 and inhibition of mitochondrial fusion. When dietary levels of stearate (C18:0) are high, TFRC stearoylation inhibits activation of the JNK pathway and thus degradation of the mitofusin MFN2. Mediates uptake of NICOL1 into fibroblasts where it may regulate extracellular matrix production. Functionally, (Microbial infection) Acts as a receptor for new-world arenaviruses: Guanarito, Junin and Machupo virus. Its function is as follows. (Microbial infection) Acts as a host entry factor for rabies virus that hijacks the endocytosis of TFRC to enter cells. (Microbial infection) Acts as a host entry factor for SARS-CoV, MERS-CoV and SARS-CoV-2 viruses that hijack the endocytosis of TFRC to enter cells. This is Transferrin receptor protein 1 (TFRC) from Homo sapiens (Human).